Consider the following 189-residue polypeptide: Xanthine phosphoribosyltransferase (189 aa).

Leu20 and Asn27 together coordinate xanthine. Residue 127–131 (AYGNA) coordinates 5-phospho-alpha-D-ribose 1-diphosphate. Lys155 serves as a coordination point for xanthine.

Belongs to the purine/pyrimidine phosphoribosyltransferase family. Xpt subfamily. Homodimer.

The protein localises to the cytoplasm. The catalysed reaction is XMP + diphosphate = xanthine + 5-phospho-alpha-D-ribose 1-diphosphate. It participates in purine metabolism; XMP biosynthesis via salvage pathway; XMP from xanthine: step 1/1. Functionally, converts the preformed base xanthine, a product of nucleic acid breakdown, to xanthosine 5'-monophosphate (XMP), so it can be reused for RNA or DNA synthesis. The protein is Xanthine phosphoribosyltransferase of Bacteroides fragilis (strain ATCC 25285 / DSM 2151 / CCUG 4856 / JCM 11019 / LMG 10263 / NCTC 9343 / Onslow / VPI 2553 / EN-2).